Reading from the N-terminus, the 201-residue chain is MAARTAFGAVCRRLWQGLGNFSVNTSKGNTAKNGGFLLSTNMKWVQFSNLHVDVPKDLTKPVITISDEPDILYKRLSVLVKGHDKAVLDSYGYFAVLAAKELGISIKVHEPPRKIERFTLLQSVHIYKKHRVQYEMRTLYRCLELEHLTGSTADVYLEYIQRNLPEGVAMEVTKTQLEQLPEHIKEPIWETLSEEKEESKS.

It belongs to the universal ribosomal protein uS10 family. As to quaternary structure, component of the mitochondrial ribosome small subunit (28S) which comprises a 12S rRNA and about 30 distinct proteins.

It is found in the mitochondrion. In Pongo abelii (Sumatran orangutan), this protein is Small ribosomal subunit protein uS10m (MRPS10).